A 555-amino-acid polypeptide reads, in one-letter code: Sulfite reductase [ferredoxin] 1 (555 aa).

The 3'-(S-cysteinyl)-tyrosine (Tyr-Cys) cross-link spans 69-161 (YTQREQGYDG…SVGLQTTEAC (93 aa)). [4Fe-4S] cluster contacts are provided by Cys417, Cys423, Cys463, and Cys467. A siroheme-binding site is contributed by Cys467.

The protein belongs to the nitrite and sulfite reductase 4Fe-4S domain family. Monomer. It depends on siroheme as a cofactor. [4Fe-4S] cluster is required as a cofactor.

It carries out the reaction hydrogen sulfide + 6 oxidized [2Fe-2S]-[ferredoxin] + 3 H2O = sulfite + 6 reduced [2Fe-2S]-[ferredoxin] + 7 H(+). Catalyzes the reduction of sulfite to sulfide, a step in the biosynthesis of sulfur-containing amino acids and cofactors. The sequence is that of Sulfite reductase [ferredoxin] 1 (sir1) from Mycolicibacterium paratuberculosis (strain ATCC BAA-968 / K-10) (Mycobacterium paratuberculosis).